We begin with the raw amino-acid sequence, 492 residues long: 2,3-bisphosphoglycerate-independent phosphoglycerate mutase (492 aa).

Mn(2+) is bound by residues aspartate 11 and serine 61. The Phosphoserine intermediate role is filled by serine 61. Residues histidine 118, 147–148, arginine 178, arginine 184, 248–251, and lysine 320 contribute to the substrate site; these read RD and RNDR. Mn(2+)-binding residues include aspartate 386, histidine 390, aspartate 427, histidine 428, and histidine 445.

It belongs to the BPG-independent phosphoglycerate mutase family. As to quaternary structure, monomer. Mn(2+) serves as cofactor.

It catalyses the reaction (2R)-2-phosphoglycerate = (2R)-3-phosphoglycerate. It functions in the pathway carbohydrate degradation; glycolysis; pyruvate from D-glyceraldehyde 3-phosphate: step 3/5. Its function is as follows. Catalyzes the interconversion of 2-phosphoglycerate and 3-phosphoglycerate. This is 2,3-bisphosphoglycerate-independent phosphoglycerate mutase from Campylobacter jejuni subsp. doylei (strain ATCC BAA-1458 / RM4099 / 269.97).